A 253-amino-acid polypeptide reads, in one-letter code: NADH-quinone oxidoreductase subunit C (253 aa).

Disordered stretches follow at residues methionine 1–proline 33 and isoleucine 234–serine 253.

Belongs to the complex I 30 kDa subunit family. As to quaternary structure, NDH-1 is composed of 14 different subunits. Subunits NuoB, C, D, E, F, and G constitute the peripheral sector of the complex.

It is found in the cell membrane. It catalyses the reaction a quinone + NADH + 5 H(+)(in) = a quinol + NAD(+) + 4 H(+)(out). In terms of biological role, NDH-1 shuttles electrons from NADH, via FMN and iron-sulfur (Fe-S) centers, to quinones in the respiratory chain. The immediate electron acceptor for the enzyme in this species is believed to be a menaquinone. Couples the redox reaction to proton translocation (for every two electrons transferred, four hydrogen ions are translocated across the cytoplasmic membrane), and thus conserves the redox energy in a proton gradient. The sequence is that of NADH-quinone oxidoreductase subunit C from Nocardia farcinica (strain IFM 10152).